A 208-amino-acid polypeptide reads, in one-letter code: Virion protein US10 homolog (208 aa).

The disordered stretch occupies residues 17 to 61 (ARGAKLSPGQHPRPSHAVRGRTAPGTRSSRRRTCEDGTSGPRDPR). The segment at 167 to 179 (CAFWCCLAHAATC) is a zinc-finger region.

Belongs to the herpesviridae US10 family. In terms of processing, phosphorylated.

The protein resides in the virion tegument. It localises to the host nucleus matrix. In Homo sapiens (Human), this protein is Virion protein US10 homolog.